The sequence spans 374 residues: S-adenosylmethionine:tRNA ribosyltransferase-isomerase (374 aa).

It belongs to the QueA family. In terms of assembly, monomer.

The protein resides in the cytoplasm. The catalysed reaction is 7-aminomethyl-7-carbaguanosine(34) in tRNA + S-adenosyl-L-methionine = epoxyqueuosine(34) in tRNA + adenine + L-methionine + 2 H(+). It participates in tRNA modification; tRNA-queuosine biosynthesis. In terms of biological role, transfers and isomerizes the ribose moiety from AdoMet to the 7-aminomethyl group of 7-deazaguanine (preQ1-tRNA) to give epoxyqueuosine (oQ-tRNA). This Prochlorococcus marinus (strain MIT 9301) protein is S-adenosylmethionine:tRNA ribosyltransferase-isomerase.